The primary structure comprises 394 residues: Flap endonuclease 1 (394 aa).

Residues 1-104 are N-domain; the sequence is MGIKQLFSII…GELAKRFQRK (104 aa). Mg(2+) is bound at residue Asp34. The DNA site is built by Arg47 and Arg70. Mg(2+)-binding residues include Asp86, Glu158, Glu160, Asp179, and Asp181. Residues 122–253 are I-domain; it reads DVEKFSRRTV…STALKLIREH (132 aa). A DNA-binding site is contributed by Glu158. Residues Gly231 and Asp233 each coordinate DNA. Asp233 is a Mg(2+) binding site. Residues 341–349 are interaction with PCNA; the sequence is QQARIEGFF. Positions 356–383 are enriched in basic and acidic residues; sequence EEEKKAHKRKLEEQAEQKRKKVKEEKKE. The segment at 356–394 is disordered; the sequence is EEEKKAHKRKLEEQAEQKRKKVKEEKKEKAKLKAKPRGA. The segment covering 384–394 has biased composition (basic residues); that stretch reads KAKLKAKPRGA.

It belongs to the XPG/RAD2 endonuclease family. FEN1 subfamily. As to quaternary structure, interacts with PCNA. Three molecules of FEN1 bind to one PCNA trimer with each molecule binding to one PCNA monomer. PCNA stimulates the nuclease activity without altering cleavage specificity. Requires Mg(2+) as cofactor. In terms of processing, phosphorylated. Phosphorylation upon DNA damage induces relocalization to the nuclear plasma.

The protein localises to the nucleus. The protein resides in the nucleolus. It localises to the nucleoplasm. Its subcellular location is the mitochondrion. Functionally, structure-specific nuclease with 5'-flap endonuclease and 5'-3' exonuclease activities involved in DNA replication and repair. During DNA replication, cleaves the 5'-overhanging flap structure that is generated by displacement synthesis when DNA polymerase encounters the 5'-end of a downstream Okazaki fragment. It enters the flap from the 5'-end and then tracks to cleave the flap base, leaving a nick for ligation. Also involved in the long patch base excision repair (LP-BER) pathway, by cleaving within the apurinic/apyrimidinic (AP) site-terminated flap. Acts as a genome stabilization factor that prevents flaps from equilibrating into structures that lead to duplications and deletions. Also possesses 5'-3' exonuclease activity on nicked or gapped double-stranded DNA, and exhibits RNase H activity. Also involved in replication and repair of rDNA and in repairing mitochondrial DNA. The chain is Flap endonuclease 1 from Sordaria macrospora (strain ATCC MYA-333 / DSM 997 / K(L3346) / K-hell).